Reading from the N-terminus, the 1083-residue chain is Error-prone DNA polymerase (1083 aa).

It belongs to the DNA polymerase type-C family. DnaE2 subfamily.

Its subcellular location is the cytoplasm. The enzyme catalyses DNA(n) + a 2'-deoxyribonucleoside 5'-triphosphate = DNA(n+1) + diphosphate. DNA polymerase involved in damage-induced mutagenesis and translesion synthesis (TLS). It is not the major replicative DNA polymerase. The polypeptide is Error-prone DNA polymerase (Xanthomonas oryzae pv. oryzae (strain KACC10331 / KXO85)).